The primary structure comprises 515 residues: RNA-splicing ligase RtcB homolog (515 aa).

5 residues coordinate Mn(2+): aspartate 129, cysteine 132, histidine 237, histidine 269, and histidine 363. 236 to 240 (NHYAE) is a binding site for GMP. Residues 363–364 (HN), 412–415 (GGTM), serine 419, 438–441 (HGAG), and lysine 514 contribute to the GMP site. Residue histidine 438 is the GMP-histidine intermediate of the active site.

The protein belongs to the RtcB family. Catalytic component of the tRNA-splicing ligase complex. Mn(2+) is required as a cofactor.

It carries out the reaction a 3'-end 3'-phospho-ribonucleotide-RNA + a 5'-end dephospho-ribonucleoside-RNA + GTP = a ribonucleotidyl-ribonucleotide-RNA + GMP + diphosphate. It catalyses the reaction a 3'-end 2',3'-cyclophospho-ribonucleotide-RNA + a 5'-end dephospho-ribonucleoside-RNA + GTP + H2O = a ribonucleotidyl-ribonucleotide-RNA + GMP + diphosphate + H(+). Catalytic subunit of the tRNA-splicing ligase complex that acts by directly joining spliced tRNA halves to mature-sized tRNAs by incorporating the precursor-derived splice junction phosphate into the mature tRNA as a canonical 3',5'-phosphodiester. May act as an RNA ligase with broad substrate specificity, and may function toward other RNAs. The polypeptide is RNA-splicing ligase RtcB homolog (Ostreococcus tauri).